The following is a 161-amino-acid chain: Nucleotide-binding protein Sden_0770 (161 aa).

It belongs to the YajQ family.

In terms of biological role, nucleotide-binding protein. The polypeptide is Nucleotide-binding protein Sden_0770 (Shewanella denitrificans (strain OS217 / ATCC BAA-1090 / DSM 15013)).